A 481-amino-acid polypeptide reads, in one-letter code: RAC-beta serine/threonine-protein kinase (481 aa).

Met-1 carries the N-acetylmethionine modification. The 104-residue stretch at 5-108 (SVIKEGWLHK…WMRAIQMVAN (104 aa)) folds into the PH domain. Ser-34 bears the Phosphoserine mark. A disulfide bond links Cys-60 and Cys-77. Position 126 is a phosphoserine (Ser-126). O-linked (GlcNAc) serine glycosylation is found at Ser-128 and Ser-131. A Protein kinase domain is found at 152–409 (FDYLKLLGKG…AKEVMEHRFF (258 aa)). ATP contacts are provided by residues 158–166 (LGKGTFGKV) and Lys-181. Asp-275 (proton acceptor) is an active-site residue. Positions 280 and 293 each coordinate Mn(2+). Cys-297 and Cys-311 are oxidised to a cystine. Thr-306 carries O-linked (GlcNAc) threonine glycosylation. Position 309 is a phosphothreonine; by PDPK1 (Thr-309). An O-linked (GlcNAc) threonine glycan is attached at Thr-313. An AGC-kinase C-terminal domain is found at 410–481 (LSINWQDVVQ…QFSYSASIRE (72 aa)). Phosphoserine is present on Ser-447. Thr-451 bears the Phosphothreonine mark. Phosphoserine is present on residues Ser-474 and Ser-478. Ser-474 carries an O-linked (GlcNAc) serine; alternate glycan.

This sequence belongs to the protein kinase superfamily. AGC Ser/Thr protein kinase family. RAC subfamily. In terms of assembly, interacts with BTBD10. Interacts with KCTD20. Interacts (via PH domain) with MTCP1, TCL1A and TCL1B; this interaction may facilitate AKT2 oligomerization and phosphorylation, hence increasing kinase activity. Interacts with PHB2; this interaction may be important for myogenic differentiation. Interacts (when phosphorylated) with CLIP3/ClipR-59; this interaction promotes AKT2 recruitment to the plasma membrane. Interacts with WDFY2/ProF (via WD repeats 1-3). Post-translationally, phosphorylation on Thr-309 and Ser-474 is required for full activity. Phosphorylation of the activation loop at Thr-309 by PDPK1/PDK1 is a prerequisite for full activation. Phosphorylated and activated by PDPK1/PDK1 in the presence of phosphatidylinositol 3,4,5-trisphosphate. Phosphorylation by mTORC2 in response to growth factors plays a key role in AKT1 activation: mTORC2 phosphorylates different sites depending on the context, such as Ser-474 or Ser-478, thereby facilitating subsequent phosphorylation of the activation loop by PDPK1/PDK1. Ubiquitinated; undergoes both 'Lys-48'- and 'Lys-63'-linked polyubiquitination. TRAF6 catalyzes 'Lys-63'-linked AKT2 ubiquitination; this modification may be important for AKT2 recruitment to the plasma membrane and for AKT2 activating phosphorylation. When phosphorylated, undergoes 'Lys-48'-polyubiquitination catalyzed by TTC3 in the nucleus, leading to its degradation by the proteasome. In terms of processing, O-GlcNAcylation at Thr-306 and Thr-313 inhibits activating phosphorylation at Thr-309 via the disruption of the interaction between AKT and PDPK1/PDK1. Widely expressed. Expressed in myoblasts.

It localises to the cytoplasm. Its subcellular location is the nucleus. It is found in the cell membrane. The protein resides in the early endosome. It carries out the reaction L-seryl-[protein] + ATP = O-phospho-L-seryl-[protein] + ADP + H(+). The enzyme catalyses L-threonyl-[protein] + ATP = O-phospho-L-threonyl-[protein] + ADP + H(+). Its activity is regulated as follows. Phosphorylation at Thr-309 (in the kinase domain) and Ser-474 (in the C-terminal regulatory region) is required for full activation. In adipocytes and hepatocytes, the activation is induced by insulin. Aminofurazans, such as 4-[2-(4-amino-2,5-dihydro-1,2,5-oxadiazol-3-yl)-6-{[(1S)-3-amino-1-phenylpropyl]oxy}-1-ethyl-1H-imidazo[4,5-c]pyridin-4-yl]-2-methylbut-3-yn-2-ol (compound 32), are potent AKT2 inhibitors. AKT2 phosphorylation of PKP1 is induced by insulin. Functionally, serine/threonine kinase closely related to AKT1 and AKT3. All 3 enzymes, AKT1, AKT2 and AKT3, are collectively known as AKT kinase. AKT regulates many processes including metabolism, proliferation, cell survival, growth and angiogenesis, through the phosphorylation of a range of downstream substrates. Over 100 substrates have been reported so far, although for most of them, the precise AKT kinase catalyzing the reaction was not specified. AKT regulates glucose uptake by mediating insulin-induced translocation of the SLC2A4/GLUT4 glucose transporter to the cell surface. Phosphorylation of PTPN1 at 'Ser-50' negatively modulates its phosphatase activity preventing dephosphorylation of the insulin receptor and the attenuation of insulin signaling. Phosphorylation of TBC1D4 triggers the binding of this effector to inhibitory 14-3-3 proteins, which is required for insulin-stimulated glucose transport. AKT also regulates the storage of glucose in the form of glycogen by phosphorylating GSK3A at 'Ser-21' and GSK3B at 'Ser-9', resulting in inhibition of its kinase activity. Phosphorylation of GSK3 isoforms by AKT is also thought to be one mechanism by which cell proliferation is driven. AKT also regulates cell survival via the phosphorylation of MAP3K5 (apoptosis signal-related kinase). Phosphorylation of 'Ser-83' decreases MAP3K5 kinase activity stimulated by oxidative stress and thereby prevents apoptosis. AKT mediates insulin-stimulated protein synthesis by phosphorylating TSC2 at 'Ser-939' and 'Thr-1462', thereby activating mTORC1 signaling and leading to both phosphorylation of 4E-BP1 and in activation of RPS6KB1. AKT is involved in the phosphorylation of members of the FOXO factors (Forkhead family of transcription factors), leading to binding of 14-3-3 proteins and cytoplasmic localization. In particular, FOXO1 is phosphorylated at 'Thr-24', 'Ser-256' and 'Ser-319'. FOXO3 and FOXO4 are phosphorylated on equivalent sites. AKT has an important role in the regulation of NF-kappa-B-dependent gene transcription and positively regulates the activity of CREB1 (cyclic AMP (cAMP)-response element binding protein). The phosphorylation of CREB1 induces the binding of accessory proteins that are necessary for the transcription of pro-survival genes such as BCL2 and MCL1. AKT phosphorylates 'Ser-454' on ATP citrate lyase (ACLY), thereby potentially regulating ACLY activity and fatty acid synthesis. Activates the 3B isoform of cyclic nucleotide phosphodiesterase (PDE3B) via phosphorylation of 'Ser-273', resulting in reduced cyclic AMP levels and inhibition of lipolysis. Phosphorylates PIKFYVE on 'Ser-318', which results in increased PI(3)P-5 activity. The Rho GTPase-activating protein DLC1 is another substrate and its phosphorylation is implicated in the regulation cell proliferation and cell growth. AKT plays a role as key modulator of the AKT-mTOR signaling pathway controlling the tempo of the process of newborn neurons integration during adult neurogenesis, including correct neuron positioning, dendritic development and synapse formation. Signals downstream of phosphatidylinositol 3-kinase (PI(3)K) to mediate the effects of various growth factors such as platelet-derived growth factor (PDGF), epidermal growth factor (EGF), insulin and insulin-like growth factor 1 (IGF1). AKT mediates the antiapoptotic effects of IGF1. Essential for the SPATA13-mediated regulation of cell migration and adhesion assembly and disassembly. May be involved in the regulation of the placental development. In response to lysophosphatidic acid stimulation, inhibits the ciliogenesis cascade. In this context, phosphorylates WDR44, hence stabilizing its interaction with Rab11 and preventing the formation of the ciliogenic Rab11-FIP3-RAB3IP complex. Also phosphorylates RAB3IP/Rabin8, thus may affect RAB3IP guanine nucleotide exchange factor (GEF) activity toward Rab8, which is important for cilia growth. Phosphorylates PKP1, facilitating its interaction with YWHAG and translocation to the nucleus, ultimately resulting in a reduction in keratinocyte intercellular adhesion. Phosphorylation of PKP1 increases PKP1 protein stability, translocation to the cytoplasm away from desmosome plaques and PKP1-driven cap-dependent translation. Its function is as follows. Several AKT2-specific substrates have been identified, including ANKRD2, C2CD5, CLK2 and PITX2. May play a role in myoblast differentiation. In this context, may act through PITX2 phosphorylation. Unphosphorylated PITX2 associates with an ELAVL1/HuR-containing complex, which stabilizes CCND1 cyclin mRNA, ensuring cell proliferation. Phosphorylation by AKT2 impairs this association, leading to CCND1 mRNA destabilization and progression towards differentiation. Also involved in the negative regulation of myogenesis in response to stress conditions. In this context, acts by phosphorylating ANKRD2. May also be a key regulator of glucose uptake. Regulates insulin-stimulated glucose transport by the increase of glucose transporter GLUT4 translocation from intracellular stores to the plasma membrane. In this context, acts by phosphorylating C2CD5/CDP138 on 'Ser-197' in insulin-stimulated adipocytes. Through the phosphorylation of CLK2 on 'Thr-343', involved in insulin-regulated suppression of hepatic gluconeogenesis. The protein is RAC-beta serine/threonine-protein kinase of Homo sapiens (Human).